Reading from the N-terminus, the 356-residue chain is Dihydroorotate dehydrogenase (quinone) (356 aa).

Residues A66–K70 and T90 each bind FMN. K70 is a substrate binding site. N115–F119 provides a ligand contact to substrate. FMN contacts are provided by N143 and N176. N176 is a binding site for substrate. The active-site Nucleophile is the S179. N181 is a binding site for substrate. The FMN site is built by K212 and T240. N241–T242 contacts substrate. FMN-binding positions include G266, G295, and Y316 to T317.

Belongs to the dihydroorotate dehydrogenase family. Type 2 subfamily. In terms of assembly, monomer. Requires FMN as cofactor.

The protein resides in the cell membrane. It carries out the reaction (S)-dihydroorotate + a quinone = orotate + a quinol. The protein operates within pyrimidine metabolism; UMP biosynthesis via de novo pathway; orotate from (S)-dihydroorotate (quinone route): step 1/1. Catalyzes the conversion of dihydroorotate to orotate with quinone as electron acceptor. The sequence is that of Dihydroorotate dehydrogenase (quinone) from Rhodococcus opacus (strain B4).